The sequence spans 211 residues: Uridine kinase (211 aa).

12–19 (GGSGGGKT) provides a ligand contact to ATP.

The protein belongs to the uridine kinase family.

It is found in the cytoplasm. It catalyses the reaction uridine + ATP = UMP + ADP + H(+). The enzyme catalyses cytidine + ATP = CMP + ADP + H(+). It participates in pyrimidine metabolism; CTP biosynthesis via salvage pathway; CTP from cytidine: step 1/3. Its pathway is pyrimidine metabolism; UMP biosynthesis via salvage pathway; UMP from uridine: step 1/1. This chain is Uridine kinase, found in Streptococcus thermophilus (strain CNRZ 1066).